The chain runs to 415 residues: Lysosome-associated membrane glycoprotein 2 (415 aa).

The signal sequence occupies residues 1–25; it reads MCLSPVKGAKLILIFLFLGAVQSNA. Residues 26-188 are first lumenal domain; the sequence is LIVNLTDSKG…SKNEQVCEED (163 aa). Residues 26 to 379 lie on the Lumenal side of the membrane; it reads LIVNLTDSKG…AQDCSADEDN (354 aa). N-linked (GlcNAc...) asparagine glycans are attached at residues Asn-29, Asn-45, Asn-54, Asn-57, Asn-97, Asn-115, and Asn-175. Cysteines 37 and 75 form a disulfide. A disulfide bridge links Cys-149 with Cys-185. Residues 189-233 are hinge; the sequence is QTPTTVAPIIHTTAPSTTTTLTPTSTPTPTPTPTPTVGNYSIRNG. Over residues 202–213 the composition is skewed to low complexity; that stretch reads APSTTTTLTPTS. Positions 202-227 are disordered; it reads APSTTTTLTPTSTPTPTPTPTPTVGN. N-linked (GlcNAc...) asparagine glycans are attached at residues Asn-227, Asn-234, Asn-247, Asn-265, Asn-280, Asn-312, Asn-317, Asn-322, and Asn-361. The tract at residues 234 to 379 is second lumenal domain; it reads NTTCLLATMG…AQDCSADEDN (146 aa). A disulfide bridge links Cys-237 with Cys-270. Cys-336 and Cys-373 are oxidised to a cystine. The chain crosses the membrane as a helical span at residues 380-404; that stretch reads FLVPIAVGAALGGVLILVLLAYFIG. The Cytoplasmic portion of the chain corresponds to 405–415; sequence LKRHHTGYEQF. The segment at 406–409 is important for binding and subsequent lysosomal degradation of target proteins; sequence KRHH.

The protein belongs to the LAMP family. In terms of assembly, monomer. Forms large homooligomers. Interacts (via its cytoplasmic region) with HSPA8; HSPA8 mediates recruitment of proteins with a KFERQ motif to the surface of the lysosome for chaperone-mediated autophagy. Interacts with HSP90 in the lysosome lumen; this enhances LAMP2 stability. Interacts with MLLT11. Interacts with ABCB9. Interacts with FURIN. Interacts with CT55; this interaction may be important for LAMP2 protein stability. Interacts with TMEM175; inhibiting the proton channel activity of TMEM175. Forms a ternary complex with RAB7A and RUFY4 (via RUN domain); the interaction with RAB7A is mediated by RUFY4 (via RUN and coiled coil domains). In terms of processing, extensively N-glycosylated. Contains a minor proportion of O-linked glycans. Detected in liver and kidney (at protein level). Detected in liver and kidney.

Its subcellular location is the lysosome membrane. It is found in the endosome membrane. The protein resides in the cytoplasmic vesicle. The protein localises to the autophagosome membrane. It localises to the cell membrane. Functionally, lysosomal membrane glycoprotein which plays an important role in lysosome biogenesis, lysosomal pH regulation and autophagy. Acts as an important regulator of lysosomal lumen pH regulation by acting as a direct inhibitor of the proton channel TMEM175, facilitating lysosomal acidification for optimal hydrolase activity. Plays an important role in chaperone-mediated autophagy, a process that mediates lysosomal degradation of proteins in response to various stresses and as part of the normal turnover of proteins with a long biological half-live. Functions by binding target proteins, such as GAPDH, NLRP3 and MLLT11, and targeting them for lysosomal degradation. In the chaperone-mediated autophagy, acts downstream of chaperones, such as HSPA8/HSC70, which recognize and bind substrate proteins and mediate their recruitment to lysosomes, where target proteins bind LAMP2. Plays a role in lysosomal protein degradation in response to starvation. Required for the fusion of autophagosomes with lysosomes during autophagy. Cells that lack LAMP2 express normal levels of VAMP8, but fail to accumulate STX17 on autophagosomes, which is the most likely explanation for the lack of fusion between autophagosomes and lysosomes. Required for normal degradation of the contents of autophagosomes. Required for efficient MHC class II-mediated presentation of exogenous antigens via its function in lysosomal protein degradation; antigenic peptides generated by proteases in the endosomal/lysosomal compartment are captured by nascent MHC II subunits. Is not required for efficient MHC class II-mediated presentation of endogenous antigens. The protein is Lysosome-associated membrane glycoprotein 2 (Lamp2) of Mus musculus (Mouse).